The primary structure comprises 99 residues: Small ribosomal subunit protein uS14m (99 aa).

Belongs to the universal ribosomal protein uS14 family.

It is found in the mitochondrion. This chain is Small ribosomal subunit protein uS14m (RPS14), found in Oenothera berteroana (Bertero's evening primrose).